Reading from the N-terminus, the 92-residue chain is Large ribosomal subunit protein bL27 (92 aa).

Residues M1–G22 form a disordered region.

The protein belongs to the bacterial ribosomal protein bL27 family.

In Mycoplasmopsis agalactiae (strain NCTC 10123 / CIP 59.7 / PG2) (Mycoplasma agalactiae), this protein is Large ribosomal subunit protein bL27.